The chain runs to 1694 residues: Clathrin heavy chain (1694 aa).

Residues 1 to 478 are globular terminal domain; sequence MTNLPIRFQE…HDRKLALSIY (478 aa). WD40-like repeat regions lie at residues 23–67, 68–107, 108–149, 150–195, 196–256, 257–300, and 301–329; these read SIGF…KQMK, TDAA…MQEP, LEFW…PDLQ, NTEI…QSIE, GHAA…EIGA, SDFP…ISNE, and NIFV…VSID. The binding site for the uncoating ATPase, involved in lattice disassembly stretch occupies residues 448 to 464; that stretch reads EKWLTEDKLECSEQLGD. Residues 479-522 form a flexible linker region; that stretch reads YRANASDKVITLFAETGEFDKIIAYCKKFNYKPDFMFLLQRMAN. Residues 523–1694 form a heavy chain arm region; it reads ANPMGAADFA…QQNYNQYGGF (1172 aa). CHCR repeat units lie at residues 537-681, 687-829, 834-973, 980-1125, 1129-1270, 1275-1421, and 1424-1567; these read KEEG…QNLQ, AVSY…QEDY, IMSV…SLID, LPES…VKEC, FIKA…FRLA, INII…LLIN, and LSVL…NSAF. The tract at residues 1214-1523 is involved in binding clathrin light chain; sequence AAKVLYTNIS…YLYKKNNRWA (310 aa). The trimerization stretch occupies residues 1551–1694; it reads GEELLQYFVD…QQNYNQYGGF (144 aa). Residues 1610-1640 adopt a coiled-coil conformation; the sequence is KVDQLVDDFKARQKKTEEEKEQQNIESSQYQ.

The protein belongs to the clathrin heavy chain family. Clathrin coats are formed from molecules containing 3 heavy chains and 3 light chains.

The protein resides in the cytoplasmic vesicle membrane. It is found in the membrane. The protein localises to the coated pit. In terms of biological role, clathrin is the major protein of the polyhedral coat of coated pits and vesicles. This Dictyostelium discoideum (Social amoeba) protein is Clathrin heavy chain (chcA).